Here is a 422-residue protein sequence, read N- to C-terminus: Serine--tRNA ligase (422 aa).

229–231 contacts L-serine; it reads TAE. 260-262 provides a ligand contact to ATP; sequence RRE. Residue Glu283 participates in L-serine binding. 347 to 350 contributes to the ATP binding site; sequence EISS. Ser383 provides a ligand contact to L-serine.

The protein belongs to the class-II aminoacyl-tRNA synthetase family. Type-1 seryl-tRNA synthetase subfamily. As to quaternary structure, homodimer. The tRNA molecule binds across the dimer.

It is found in the cytoplasm. It carries out the reaction tRNA(Ser) + L-serine + ATP = L-seryl-tRNA(Ser) + AMP + diphosphate + H(+). The catalysed reaction is tRNA(Sec) + L-serine + ATP = L-seryl-tRNA(Sec) + AMP + diphosphate + H(+). It participates in aminoacyl-tRNA biosynthesis; selenocysteinyl-tRNA(Sec) biosynthesis; L-seryl-tRNA(Sec) from L-serine and tRNA(Sec): step 1/1. Catalyzes the attachment of serine to tRNA(Ser). Is also able to aminoacylate tRNA(Sec) with serine, to form the misacylated tRNA L-seryl-tRNA(Sec), which will be further converted into selenocysteinyl-tRNA(Sec). The chain is Serine--tRNA ligase from Pelobacter propionicus (strain DSM 2379 / NBRC 103807 / OttBd1).